The primary structure comprises 474 residues: MTKKLHIKTWGCQMNEYDSSKMADLLDATHGYQLTDVAEEADVLLLNTCSIREKAQEKVFHQLGRWKLLKEKNPDLIIGVGGCVASQEGEHIRQRAHYVDIIFGPQTLHRLPEMINSVRGDRSPVVDISFPEIEKFDRLPEPRAEGPTAFVSIMEGCNKYCTYCVVPYTRGEEVSRPSDDILFEIAQLAAQGVREVNLLGQNVNAWRGENYDGTTGSFADLLRLVAAIDGIDRIRFTTSHPIEFTDDIIEVYRDTPELVSFLHLPVQSGSDRILNLMGRTHTALEYKAIIRKLRAARPDIQISSDFIVGFPGETTEDFEKTMKLIADVNFDMSYSFIFSARPGTPAADMVDDVPEEEKKQRLYILQERINQQAMAWSRRMLGTTQRILVEGTSRKSIMELSGRTENNRVVNFEGTPDMIGKFVDVEITDVYPNSLRGKVVRTEDEMGLRVAETPESVIARTRKENDLGVGYYQP.

The MTTase N-terminal domain occupies 3 to 120; the sequence is KKLHIKTWGC…LPEMINSVRG (118 aa). [4Fe-4S] cluster is bound by residues Cys12, Cys49, Cys83, Cys157, Cys161, and Cys164. The Radical SAM core domain maps to 143-375; sequence RAEGPTAFVS…QERINQQAMA (233 aa). In terms of domain architecture, TRAM spans 378–441; sequence RRMLGTTQRI…PNSLRGKVVR (64 aa).

The protein belongs to the methylthiotransferase family. MiaB subfamily. In terms of assembly, monomer. Requires [4Fe-4S] cluster as cofactor.

Its subcellular location is the cytoplasm. It carries out the reaction N(6)-dimethylallyladenosine(37) in tRNA + (sulfur carrier)-SH + AH2 + 2 S-adenosyl-L-methionine = 2-methylsulfanyl-N(6)-dimethylallyladenosine(37) in tRNA + (sulfur carrier)-H + 5'-deoxyadenosine + L-methionine + A + S-adenosyl-L-homocysteine + 2 H(+). In terms of biological role, catalyzes the methylthiolation of N6-(dimethylallyl)adenosine (i(6)A), leading to the formation of 2-methylthio-N6-(dimethylallyl)adenosine (ms(2)i(6)A) at position 37 in tRNAs that read codons beginning with uridine. The chain is tRNA-2-methylthio-N(6)-dimethylallyladenosine synthase from Escherichia coli (strain SMS-3-5 / SECEC).